Consider the following 661-residue polypeptide: Polyadenylate-binding protein, cytoplasmic and nuclear (661 aa).

Residues 1–11 (MSAAETNQVQE) are compositionally biased toward polar residues. The disordered stretch occupies residues 1–61 (MSAAETNQVQ…SAEEQGESSG (61 aa)). Positions 20–51 (SSSSPAAGGATTATTTNNAESSDATSSSVPAD) are enriched in low complexity. 4 consecutive RRM domains span residues 67–145 (ASLY…WSQR), 155–232 (GNIF…KHVS), 248–325 (TNIY…RAQK), and 351–428 (VNLF…LAQR). The segment at 473-563 (FPPNGRGNAP…PNRPAGGNVP (91 aa)) is disordered. A compositionally biased stretch (pro residues) spans 501–511 (EQWPRPGPNGQ). The segment covering 523–532 (QDFNGQNMRP) has biased composition (polar residues). Over residues 533-549 (QQQQQQQQQQQQQQQQQ) the composition is skewed to low complexity. Residues 563–644 (PAKDLAALIA…ALNAFEEYKN (82 aa)) form the PABC domain.

It belongs to the polyadenylate-binding protein type-1 family.

It localises to the cytoplasm. Its subcellular location is the nucleus. Binds the poly(A) tail of mRNA. Appears to be an important mediator of the multiple roles of the poly(A) tail in mRNA biogenesis, stability and translation. In the nucleus, involved in both mRNA cleavage and polyadenylation. Is also required for efficient mRNA export to the cytoplasm. Acts in concert with a poly(A)-specific nuclease (PAN) to affect poly(A) tail shortening, which may occur concomitantly with either nucleocytoplasmic mRNA transport or translational initiation. In the cytoplasm, stimulates translation initiation and regulates mRNA decay through translation termination-coupled poly(A) shortening, probably mediated by PAN. This chain is Polyadenylate-binding protein, cytoplasmic and nuclear (PAB1), found in Lodderomyces elongisporus (strain ATCC 11503 / CBS 2605 / JCM 1781 / NBRC 1676 / NRRL YB-4239) (Yeast).